Reading from the N-terminus, the 332-residue chain is Eukaryotic translation initiation factor 3 subunit H (332 aa).

An MPN domain is found at V18–M153. Residues Q251 to F285 form a disordered region.

It belongs to the eIF-3 subunit H family. As to quaternary structure, component of the eukaryotic translation initiation factor 3 (eIF-3) complex.

It localises to the cytoplasm. Functionally, component of the eukaryotic translation initiation factor 3 (eIF-3) complex, which is involved in protein synthesis of a specialized repertoire of mRNAs and, together with other initiation factors, stimulates binding of mRNA and methionyl-tRNAi to the 40S ribosome. The eIF-3 complex specifically targets and initiates translation of a subset of mRNAs involved in cell proliferation. The sequence is that of Eukaryotic translation initiation factor 3 subunit H from Nematostella vectensis (Starlet sea anemone).